The primary structure comprises 345 residues: Phosphoribosylformylglycinamidine cyclo-ligase (345 aa).

This sequence belongs to the AIR synthase family.

It is found in the cytoplasm. The enzyme catalyses 2-formamido-N(1)-(5-O-phospho-beta-D-ribosyl)acetamidine + ATP = 5-amino-1-(5-phospho-beta-D-ribosyl)imidazole + ADP + phosphate + H(+). Its pathway is purine metabolism; IMP biosynthesis via de novo pathway; 5-amino-1-(5-phospho-D-ribosyl)imidazole from N(2)-formyl-N(1)-(5-phospho-D-ribosyl)glycinamide: step 2/2. The protein is Phosphoribosylformylglycinamidine cyclo-ligase of Escherichia coli O139:H28 (strain E24377A / ETEC).